Here is a 363-residue protein sequence, read N- to C-terminus: NADH-quinone oxidoreductase subunit H (363 aa).

Transmembrane regions (helical) follow at residues Val29–Trp49, Gly62–Phe82, Phe96–Phe116, Val127–Gly147, Ala163–Ala183, Phe202–Val222, Glu238–Leu257, Ile264–Val286, Lys299–Phe319, and Phe339–Ile359.

It belongs to the complex I subunit 1 family. In terms of assembly, NDH-1 is composed of 14 different subunits. Subunits NuoA, H, J, K, L, M, N constitute the membrane sector of the complex.

The protein localises to the cell inner membrane. It catalyses the reaction a quinone + NADH + 5 H(+)(in) = a quinol + NAD(+) + 4 H(+)(out). Functionally, NDH-1 shuttles electrons from NADH, via FMN and iron-sulfur (Fe-S) centers, to quinones in the respiratory chain. The immediate electron acceptor for the enzyme in this species is believed to be ubiquinone. Couples the redox reaction to proton translocation (for every two electrons transferred, four hydrogen ions are translocated across the cytoplasmic membrane), and thus conserves the redox energy in a proton gradient. This subunit may bind ubiquinone. The polypeptide is NADH-quinone oxidoreductase subunit H (Xanthomonas euvesicatoria pv. vesicatoria (strain 85-10) (Xanthomonas campestris pv. vesicatoria)).